We begin with the raw amino-acid sequence, 478 residues long: Chromosomal replication initiator protein DnaA (478 aa).

Positions 1 to 95 are domain I, interacts with DnaA modulators; the sequence is MNKTLNPQEV…DVLEKEITEE (95 aa). The segment at 96–141 is domain II; that stretch reads INDLVQSMEEEDFALIDHTKPVIPNFFDQNTRVNFGGGPNNHHPTT. Residues 142–358 are domain III, AAA+ region; that stretch reads GVNPRFTFDN…GALLRIFALA (217 aa). Residues Gly-186, Gly-188, Lys-189, and Thr-190 each contribute to the ATP site. A domain IV, binds dsDNA region spans residues 359 to 478; the sequence is SFNKEEINMT…YKLTQFILRR (120 aa).

This sequence belongs to the DnaA family. As to quaternary structure, oligomerizes as a right-handed, spiral filament on DNA at oriC.

The protein resides in the cytoplasm. Its function is as follows. Plays an essential role in the initiation and regulation of chromosomal replication. ATP-DnaA binds to the origin of replication (oriC) to initiate formation of the DNA replication initiation complex once per cell cycle. Binds the DnaA box (a 9 base pair repeat at the origin) and separates the double-stranded (ds)DNA. Forms a right-handed helical filament on oriC DNA; dsDNA binds to the exterior of the filament while single-stranded (ss)DNA is stabiized in the filament's interior. The ATP-DnaA-oriC complex binds and stabilizes one strand of the AT-rich DNA unwinding element (DUE), permitting loading of DNA polymerase. After initiation quickly degrades to an ADP-DnaA complex that is not apt for DNA replication. Binds acidic phospholipids. The protein is Chromosomal replication initiator protein DnaA of Tropheryma whipplei (strain TW08/27) (Whipple's bacillus).